A 309-amino-acid polypeptide reads, in one-letter code: L-arabinose 1-dehydrogenase (NAD(P)(+)) (309 aa).

NADP(+) contacts are provided by residues isoleucine 15 and 37–38; that span reads SR. Lysine 91 functions as the Proton donor in the catalytic mechanism. Aspartate 169 contacts NADP(+).

It belongs to the Gfo/Idh/MocA family. In terms of assembly, monomer.

It carries out the reaction alpha-L-arabinopyanose + NAD(+) = L-arabinono-1,4-lactone + NADH + H(+). It catalyses the reaction alpha-L-arabinopyanose + NADP(+) = L-arabinono-1,4-lactone + NADPH + H(+). The enzyme catalyses D-galactose + NAD(+) = D-galactono-1,4-lactone + NADH + H(+). The catalysed reaction is D-galactose + NADP(+) = D-galactono-1,5-lactone + NADPH + H(+). Its pathway is carbohydrate degradation; L-arabinose degradation via L-arabinono-1,4-lactone pathway. Its function is as follows. Catalyzes the NAD(P)(+)-dependent conversion of L-arabinose to L-arabino-gamma-lactone. Is involved in a degradation pathway of L-arabinose that allows A.brasilense to grow on L-arabinose as a sole carbon source. Prefers NADP(+) to NAD(+) as electron acceptor. Displays high catalytic efficiency for both L-arabinose and D-galactose in vitro. However, the enzyme appears to be involved in the metabolism of L-arabinose but not D-galactose in vivo. To a lesser extent, is also active on D-talose and D-xylose as substrates in vitro, but not with D-arabinose, D-glucose, D-ribose, L-xylose, L-mannose, L-lyxose, and D-fructose. This is L-arabinose 1-dehydrogenase (NAD(P)(+)) (araA) from Azospirillum brasilense.